The following is a 168-amino-acid chain: NADH dehydrogenase [ubiquinone] 1 alpha subcomplex assembly factor 2 (168 aa).

The disordered stretch occupies residues 112–168 (GKETSEELLPSPTATQVKGHASAPYFGREEPSVAPTSTGKTFQPGSWTPEDGKRQSQ). Ser133 bears the Phosphoserine mark. Positions 145-157 (APTSTGKTFQPGS) are enriched in polar residues.

It belongs to the complex I NDUFA12 subunit family. In terms of assembly, interacts with ARMC9.

The protein localises to the mitochondrion. In terms of biological role, acts as a molecular chaperone for mitochondrial complex I assembly. Complex I functions in the transfer of electrons from NADH to the respiratory chain. The immediate electron acceptor for the enzyme is believed to be ubiquinone. Is involved in the initial steps of cilia formation, including removal of CP110 from the mother centrioles, docking of membrane vesicles to the mother centrioles, and establishment of the transition zone. The chain is NADH dehydrogenase [ubiquinone] 1 alpha subcomplex assembly factor 2 (Ndufaf2) from Mus musculus (Mouse).